The primary structure comprises 414 residues: Serine/threonine transporter SstT (414 aa).

9 helical membrane passes run I19–V39, F55–I75, I89–F109, A148–L168, I189–L209, L223–V243, I297–L317, L323–A343, and L363–V383.

The protein belongs to the dicarboxylate/amino acid:cation symporter (DAACS) (TC 2.A.23) family.

The protein localises to the cell inner membrane. The catalysed reaction is L-serine(in) + Na(+)(in) = L-serine(out) + Na(+)(out). The enzyme catalyses L-threonine(in) + Na(+)(in) = L-threonine(out) + Na(+)(out). Its function is as follows. Involved in the import of serine and threonine into the cell, with the concomitant import of sodium (symport system). This Actinobacillus succinogenes (strain ATCC 55618 / DSM 22257 / CCUG 43843 / 130Z) protein is Serine/threonine transporter SstT.